We begin with the raw amino-acid sequence, 152 residues long: Large ribosomal subunit protein uL30 (152 aa).

Belongs to the universal ribosomal protein uL30 family. As to quaternary structure, part of the 50S ribosomal subunit.

The protein is Large ribosomal subunit protein uL30 of Archaeoglobus fulgidus (strain ATCC 49558 / DSM 4304 / JCM 9628 / NBRC 100126 / VC-16).